The primary structure comprises 121 residues: Met-lysine-1a (121 aa).

An N-terminal signal peptide occupies residues Met-1–Ser-22. A propeptide spanning residues Asp-23–Arg-69 is cleaved from the precursor. Met-120 is modified (methionine amide).

As to expression, expressed by the venom gland.

Its subcellular location is the secreted. Shows no antimicrobial activity against Gram-positive bacterium B.subtilis B-501 or Gram-negative bacterium E.coli DH5-alpha at concentrations up to 20 ug/ml. Shows no toxicity towards insect (S.carnaria) larvae. This is Met-lysine-1a from Lachesana tarabaevi (Spider).